Reading from the N-terminus, the 114-residue chain is Nucleoid-associated protein Tlet_0999 (114 aa).

Belongs to the YbaB/EbfC family. Homodimer.

The protein resides in the cytoplasm. Its subcellular location is the nucleoid. Functionally, binds to DNA and alters its conformation. May be involved in regulation of gene expression, nucleoid organization and DNA protection. In Pseudothermotoga lettingae (strain ATCC BAA-301 / DSM 14385 / NBRC 107922 / TMO) (Thermotoga lettingae), this protein is Nucleoid-associated protein Tlet_0999.